Consider the following 334-residue polypeptide: tRNA-dihydrouridine synthase B (334 aa).

FMN contacts are provided by residues 16–18 and glutamine 70; that span reads PMA. Cysteine 100 functions as the Proton donor in the catalytic mechanism. FMN-binding positions include lysine 139, 200-202, and 224-225; these read NGD and GR.

The protein belongs to the Dus family. DusB subfamily. Requires FMN as cofactor.

It carries out the reaction a 5,6-dihydrouridine in tRNA + NAD(+) = a uridine in tRNA + NADH + H(+). The catalysed reaction is a 5,6-dihydrouridine in tRNA + NADP(+) = a uridine in tRNA + NADPH + H(+). In terms of biological role, catalyzes the synthesis of 5,6-dihydrouridine (D), a modified base found in the D-loop of most tRNAs, via the reduction of the C5-C6 double bond in target uridines. This Serratia marcescens protein is tRNA-dihydrouridine synthase B.